The following is a 213-amino-acid chain: Thiopurine S-methyltransferase (213 aa).

Positions 10, 45, 66, and 121 each coordinate S-adenosyl-L-methionine.

The protein belongs to the class I-like SAM-binding methyltransferase superfamily. TPMT family.

Its subcellular location is the cytoplasm. It carries out the reaction S-adenosyl-L-methionine + a thiopurine = S-adenosyl-L-homocysteine + a thiopurine S-methylether.. The sequence is that of Thiopurine S-methyltransferase from Aliivibrio fischeri (strain MJ11) (Vibrio fischeri).